The sequence spans 150 residues: 3-dehydroquinate dehydratase (150 aa).

Tyr-23 acts as the Proton acceptor in catalysis. Residues Asn-75, His-81, and Asp-88 each coordinate substrate. His-101 functions as the Proton donor in the catalytic mechanism. Substrate contacts are provided by residues 102-103 (LS) and Arg-112.

This sequence belongs to the type-II 3-dehydroquinase family. Homododecamer.

The enzyme catalyses 3-dehydroquinate = 3-dehydroshikimate + H2O. Its pathway is metabolic intermediate biosynthesis; chorismate biosynthesis; chorismate from D-erythrose 4-phosphate and phosphoenolpyruvate: step 3/7. Functionally, catalyzes a trans-dehydration via an enolate intermediate. The chain is 3-dehydroquinate dehydratase from Pseudomonas savastanoi pv. phaseolicola (strain 1448A / Race 6) (Pseudomonas syringae pv. phaseolicola (strain 1448A / Race 6)).